The primary structure comprises 504 residues: Anaerobic nitric oxide reductase transcription regulator NorR (504 aa).

A 4-aspartylphosphate modification is found at aspartate 57. The region spanning 187–416 (MIGLSPGMTQ…LEHAIHRAVV (230 aa)) is the Sigma-54 factor interaction domain. ATP is bound by residues 215–222 (GETGTGKE) and 278–287 (ADNGTLFLDE). The H-T-H motif DNA-binding region spans 479 to 498 (WAACARMLETDVANLHRLAK).

It functions in the pathway nitrogen metabolism; nitric oxide reduction. Required for the expression of anaerobic nitric oxide (NO) reductase, acts as a transcriptional activator for at least the norVW operon. Activation also requires sigma-54. This Escherichia coli O127:H6 (strain E2348/69 / EPEC) protein is Anaerobic nitric oxide reductase transcription regulator NorR.